The following is a 349-amino-acid chain: S-adenosylmethionine decarboxylase proenzyme 3 (349 aa).

Residues Glu-9 and Glu-12 contribute to the active site. Residue Glu-68 participates in substrate binding. Ser-69 acts as the Schiff-base intermediate with substrate; via pyruvic acid in catalysis. At Ser-69 the chain carries Pyruvic acid (Ser); by autocatalysis. Cys-83 functions as the Proton donor; for catalytic activity in the catalytic mechanism. Residues Ser-235 and His-248 each act as proton acceptor; for processing activity in the active site. Residue Glu-252 participates in substrate binding.

The protein belongs to the eukaryotic AdoMetDC family. Requires pyruvate as cofactor. Is synthesized initially as an inactive proenzyme. Formation of the active enzyme involves a self-maturation process in which the active site pyruvoyl group is generated from an internal serine residue via an autocatalytic post-translational modification. Two non-identical subunits are generated from the proenzyme in this reaction, and the pyruvate is formed at the N-terminus of the alpha chain, which is derived from the carboxyl end of the proenzyme. The post-translation cleavage follows an unusual pathway, termed non-hydrolytic serinolysis, in which the side chain hydroxyl group of the serine supplies its oxygen atom to form the C-terminus of the beta chain, while the remainder of the serine residue undergoes an oxidative deamination to produce ammonia and the pyruvoyl group blocking the N-terminus of the alpha chain.

It carries out the reaction S-adenosyl-L-methionine + H(+) = S-adenosyl 3-(methylsulfanyl)propylamine + CO2. The protein operates within amine and polyamine biosynthesis; S-adenosylmethioninamine biosynthesis; S-adenosylmethioninamine from S-adenosyl-L-methionine: step 1/1. In terms of biological role, essential for biosynthesis of the polyamines spermidine and spermine. Essential for polyamine homeostasis, and normal plant embryogenesis, growth and development. The sequence is that of S-adenosylmethionine decarboxylase proenzyme 3 from Arabidopsis thaliana (Mouse-ear cress).